A 554-amino-acid polypeptide reads, in one-letter code: Urocanate hydratase (554 aa).

NAD(+)-binding positions include 49–50 (GG), Gln127, 173–175 (GMG), Glu193, Arg198, 239–240 (NA), 260–264 (QTSAH), 270–271 (YI), and Tyr319. Residue Cys407 is part of the active site. NAD(+) is bound at residue Gly489.

Belongs to the urocanase family. The cofactor is NAD(+).

The protein localises to the cytoplasm. The catalysed reaction is 4-imidazolone-5-propanoate = trans-urocanate + H2O. It functions in the pathway amino-acid degradation; L-histidine degradation into L-glutamate; N-formimidoyl-L-glutamate from L-histidine: step 2/3. In terms of biological role, catalyzes the conversion of urocanate to 4-imidazolone-5-propionate. The polypeptide is Urocanate hydratase (Bacillus velezensis (strain DSM 23117 / BGSC 10A6 / LMG 26770 / FZB42) (Bacillus amyloliquefaciens subsp. plantarum)).